The sequence spans 423 residues: Progestin and adipoQ receptor-like protein 1 (423 aa).

The Cytoplasmic portion of the chain corresponds to 1–201 (MDPDEVNQAL…KSIWSLHTET (201 aa)). The interval 54–140 (VVSPTNSDDE…DEDELEVDVK (87 aa)) is disordered. The segment covering 60–69 (SDDEEGEFCS) has biased composition (acidic residues). Residues 104-114 (TVLRYRRKKGG) are compositionally biased toward basic residues. Residues 202 to 222 (GNIWTHLIGCVAFFLLACWFL) form a helical membrane-spanning segment. The Extracellular portion of the chain corresponds to 223–234 (TRPDNHIQFQEK). A helical transmembrane segment spans residues 235–252 (VVFSFFFAGAVSVSDSRS). The Cytoplasmic segment spans residues 253–288 (PSTPSRVIRSTSSRYSANSTIWESRCSLSARLFQPK). Residues 289-309 (ITYIAMVCVLGIGAIVVSLWD) form a helical membrane-spanning segment. Residues 310 to 320 (KFSESKYRPVR) are Extracellular-facing. The chain crosses the membrane as a helical span at residues 321–341 (AAVFVGMGCSGVIPTIHYIIT). The Cytoplasmic segment spans residues 342–351 (DGVHSLFADN). Residues 352–372 (SFHWLLLMAFLYLLGAALYAT) traverse the membrane as a helical segment. Residues 373–392 (RTPERFFPGKCDIWFQSHQL) lie on the Extracellular side of the membrane. The chain crosses the membrane as a helical span at residues 393-413 (FHTCVVIAAFVHYYGISEMAF). The Cytoplasmic portion of the chain corresponds to 414–423 (ARLNEQCPVR).

It belongs to the ADIPOR family.

The protein localises to the membrane. Functionally, probable receptor, which may be involved in metabolic pathways that regulate lipid metabolism such as fatty acid oxidation. This chain is Progestin and adipoQ receptor-like protein 1, found in Caenorhabditis briggsae.